The chain runs to 537 residues: Bifunctional NAD(P)H-hydrate repair enzyme Nnr (537 aa).

The interval 1 to 227 is NAD(P)H-hydrate epimerase; sequence MLGRPVFGLG…PPEAEVYVGP (227 aa). The YjeF N-terminal domain occupies 13–223; sequence ITSVDVAVID…SIGAPPEAEV (211 aa). The NADPHX 1; for epimerase activity stretch occupies residues 65 to 69; sequence GNGGD. K(+) is bound by residues N66 and D135. The interval 139–145 is NADPHX 1; for epimerase activity; the sequence is GTGLRGA. (6S)-NADPHX contacts are provided by Y150 and D168. Residue S171 participates in K(+) binding. The 283-residue stretch at 226–508 folds into the YjeF C-terminal domain; the sequence is GPGDVAYRVR…EKIPEALNNP (283 aa). The tract at residues 227-537 is ADP-dependent (S)-NAD(P)H-hydrate dehydratase; that stretch reads PGDVAYRVRP…WQPPVGRSES (311 aa). (6S)-NADPHX is bound at residue G329. An NADPHX 2; for dehydratase activity region spans residues 381–387; the sequence is HQREFQI. Residues 421-425 and 440-449 each bind ADP; these read KGPID and VPAMSVGGTG. D450 is a (6S)-NADPHX binding site.

In the N-terminal section; belongs to the NnrE/AIBP family. This sequence in the C-terminal section; belongs to the NnrD/CARKD family. It depends on K(+) as a cofactor.

It carries out the reaction (6S)-NADHX + ADP = AMP + phosphate + NADH + H(+). The enzyme catalyses (6S)-NADPHX + ADP = AMP + phosphate + NADPH + H(+). The catalysed reaction is (6R)-NADHX = (6S)-NADHX. It catalyses the reaction (6R)-NADPHX = (6S)-NADPHX. Its function is as follows. Bifunctional enzyme that catalyzes the epimerization of the S- and R-forms of NAD(P)HX and the dehydration of the S-form of NAD(P)HX at the expense of ADP, which is converted to AMP. This allows the repair of both epimers of NAD(P)HX, a damaged form of NAD(P)H that is a result of enzymatic or heat-dependent hydration. The sequence is that of Bifunctional NAD(P)H-hydrate repair enzyme Nnr (nnr) from Hyperthermus butylicus (strain DSM 5456 / JCM 9403 / PLM1-5).